The chain runs to 367 residues: uncharacterized protein (367 aa).

A helical membrane pass occupies residues 8 to 28 (VLIGTFVLAAILAVFGFIYWL).

Its subcellular location is the membrane. This is an uncharacterized protein from Bradyrhizobium diazoefficiens (strain JCM 10833 / BCRC 13528 / IAM 13628 / NBRC 14792 / USDA 110).